A 493-amino-acid chain; its full sequence is D-glyceraldehyde dehydrogenase (NADP(+)) (493 aa).

Residues 70–92 are a coiled coil; it reads RAKELIEKNRAELENIIMEENGK. NADP(+) contacts are provided by residues 146-149, R157, 172-176, 204-210, 225-248, C281, and 381-383; these read TPWN, KPSSD, RGSEIGD, GSTA…ILEL, and EIF. Residues N149 and R157 each coordinate substrate. E247 (proton acceptor) is an active-site residue. Position 281 (C281) interacts with substrate. The Proton donor role is filled by C281.

It belongs to the aldehyde dehydrogenase family. Glyceraldehyde dehydrogenase subfamily. As to quaternary structure, homotetramer. Dimer of dimers.

It carries out the reaction D-glyceraldehyde + NADP(+) + H2O = (R)-glycerate + NADPH + 2 H(+). The protein operates within carbohydrate degradation; glycolysis. Inhibited by calcium, cadmium, copper and mercury ions. Stable for 2 hours at 60 degrees Celsius but activity is decreased to less than 50 percent within 20 minutes at 80 degrees Celsius. Two folds activity enhancement in the presence of 1 mM glutathione, DTT, or 2-mercaptoethanol. Complete activity inhibition by thiol-modifying reagents such as p-chloromercuribenzoic acid or p-hydroxy-mercuribenzoic acid. Functionally, NADP-dependent dehydrogenase of the nED (non-phosphorylated Entner-Doudoroff) pathway with highest activity towards glyceraldehydes (e.g. D,L-glyceraldehyde and D-glyceraldehyde), to a lesser extent towards D,L-glyceraldehyde-3-phosphate and glycolaldehyde, but no activity towards aliphatic or aromatic aldehydes. In Thermoplasma acidophilum (strain ATCC 25905 / DSM 1728 / JCM 9062 / NBRC 15155 / AMRC-C165), this protein is D-glyceraldehyde dehydrogenase (NADP(+)).